Consider the following 225-residue polypeptide: Endonuclease V (225 aa).

Mg(2+) is bound by residues Asp43 and Asp110. Interaction with target DNA stretches follow at residues Lys139–Arg141 and His214–Lys221.

It belongs to the endonuclease V family. Requires Mg(2+) as cofactor.

The protein resides in the cytoplasm. The catalysed reaction is Endonucleolytic cleavage at apurinic or apyrimidinic sites to products with a 5'-phosphate.. In terms of biological role, DNA repair enzyme involved in the repair of deaminated bases. Selectively cleaves double-stranded DNA at the second phosphodiester bond 3' to a deoxyinosine leaving behind the intact lesion on the nicked DNA. In vitro, can also cleave single-stranded substrates with inosine, double-stranded DNA with apurinic sites, or DNA sites with uracil or a mismatched base. When present in molar excess, two protein molecules can bind to the same DNA substrate and effect cleavage of both strands (in vitro). This is Endonuclease V from Thermotoga maritima (strain ATCC 43589 / DSM 3109 / JCM 10099 / NBRC 100826 / MSB8).